We begin with the raw amino-acid sequence, 144 residues long: Large ribosomal subunit protein uL15 (144 aa).

Residues methionine 1–valine 44 form a disordered region. The segment covering threonine 23 to glutamine 35 has biased composition (gly residues).

It belongs to the universal ribosomal protein uL15 family. As to quaternary structure, part of the 50S ribosomal subunit.

In terms of biological role, binds to the 23S rRNA. The chain is Large ribosomal subunit protein uL15 from Leuconostoc mesenteroides subsp. mesenteroides (strain ATCC 8293 / DSM 20343 / BCRC 11652 / CCM 1803 / JCM 6124 / NCDO 523 / NBRC 100496 / NCIMB 8023 / NCTC 12954 / NRRL B-1118 / 37Y).